We begin with the raw amino-acid sequence, 301 residues long: UDP-N-acetylenolpyruvoylglucosamine reductase (301 aa).

The region spanning 30–194 (VGGEPDYLVF…LSAKFALAPG (165 aa)) is the FAD-binding PCMH-type domain. The active site involves Arg-173. The active-site Proton donor is Ser-223. Residue Glu-293 is part of the active site.

Belongs to the MurB family. The cofactor is FAD.

It localises to the cytoplasm. It carries out the reaction UDP-N-acetyl-alpha-D-muramate + NADP(+) = UDP-N-acetyl-3-O-(1-carboxyvinyl)-alpha-D-glucosamine + NADPH + H(+). It participates in cell wall biogenesis; peptidoglycan biosynthesis. Functionally, cell wall formation. This Streptococcus pneumoniae (strain CGSP14) protein is UDP-N-acetylenolpyruvoylglucosamine reductase.